Here is a 72-residue protein sequence, read N- to C-terminus: DNA-directed RNA polymerase subunit omega (72 aa).

The protein belongs to the RNA polymerase subunit omega family. As to quaternary structure, the RNAP catalytic core consists of 2 alpha, 1 beta, 1 beta' and 1 omega subunit. When a sigma factor is associated with the core the holoenzyme is formed, which can initiate transcription.

The catalysed reaction is RNA(n) + a ribonucleoside 5'-triphosphate = RNA(n+1) + diphosphate. In terms of biological role, promotes RNA polymerase assembly. Latches the N- and C-terminal regions of the beta' subunit thereby facilitating its interaction with the beta and alpha subunits. The polypeptide is DNA-directed RNA polymerase subunit omega (Limosilactobacillus reuteri (strain DSM 20016) (Lactobacillus reuteri)).